The primary structure comprises 628 residues: Probable alpha-L-arabinofuranosidase A (628 aa).

The first 25 residues, 1-25 (MVAFSTISGLGALSLLFSIIESVDG), serve as a signal peptide directing secretion. N-linked (GlcNAc...) asparagine glycans are attached at residues Asn-36, Asn-51, Asn-74, Asn-152, Asn-164, Asn-260, Asn-359, Asn-404, and Asn-493.

The protein belongs to the glycosyl hydrolase 51 family.

The protein resides in the secreted. It carries out the reaction Hydrolysis of terminal non-reducing alpha-L-arabinofuranoside residues in alpha-L-arabinosides.. It participates in glycan metabolism; L-arabinan degradation. Alpha-L-arabinofuranosidase involved in the degradation of arabinoxylan, a major component of plant hemicellulose. Acts only on small linear 1,5-alpha-linked L-arabinofuranosyl oligosaccharides. This Aspergillus terreus (strain NIH 2624 / FGSC A1156) protein is Probable alpha-L-arabinofuranosidase A (abfA).